Reading from the N-terminus, the 98-residue chain is Large ribosomal subunit protein uL23 (98 aa).

This sequence belongs to the universal ribosomal protein uL23 family. As to quaternary structure, part of the 50S ribosomal subunit. Contacts protein L29, and trigger factor when it is bound to the ribosome.

Functionally, one of the early assembly proteins it binds 23S rRNA. One of the proteins that surrounds the polypeptide exit tunnel on the outside of the ribosome. Forms the main docking site for trigger factor binding to the ribosome. In Methylobacterium nodulans (strain LMG 21967 / CNCM I-2342 / ORS 2060), this protein is Large ribosomal subunit protein uL23.